The chain runs to 656 residues: Nuclear pore complex protein Nup85 (656 aa).

Methionine 1 is subject to N-acetylmethionine. The residue at position 92 (lysine 92) is an N6-acetyllysine. At serine 223 the chain carries Phosphoserine.

It belongs to the nucleoporin Nup85 family. In terms of assembly, component of the nuclear pore complex (NPC). Component of the NPC Nup107-160 subcomplex, consisting of at least NUP107, NUP98/Nup96, NUP160, NUP133, NUP85, NUP37, NUP43 and SEC13. Interacts with NUP160, NUP133 and SEC13. Interacts with NUP37, NUP107 and NUP43. Interacts with CCR2.

Its subcellular location is the nucleus. The protein localises to the nuclear pore complex. The protein resides in the chromosome. It localises to the centromere. It is found in the kinetochore. Its subcellular location is the cytoplasm. The protein localises to the cytoskeleton. The protein resides in the spindle. It localises to the nucleus membrane. Essential component of the nuclear pore complex (NPC) that seems to be required for NPC assembly and maintenance. As part of the NPC Nup107-160 subcomplex plays a role in RNA export and in tethering NUP96/Nup98 and NUP153 to the nucleus. The Nup107-160 complex seems to be required for spindle assembly during mitosis. NUP85 is required for membrane clustering of CCL2-activated CCR2. Seems to be involved in CCR2-mediated chemotaxis of monocytes and may link activated CCR2 to the phosphatidyl-inositol 3-kinase-Rac-lammellipodium protrusion cascade. Involved in nephrogenesis. This chain is Nuclear pore complex protein Nup85 (NUP85), found in Homo sapiens (Human).